A 375-amino-acid chain; its full sequence is DNA replication and repair protein RecF (375 aa).

30-37 contributes to the ATP binding site; sequence GNNGSGKS.

This sequence belongs to the RecF family.

Its subcellular location is the cytoplasm. Its function is as follows. The RecF protein is involved in DNA metabolism; it is required for DNA replication and normal SOS inducibility. RecF binds preferentially to single-stranded, linear DNA. It also seems to bind ATP. This chain is DNA replication and repair protein RecF, found in Hahella chejuensis (strain KCTC 2396).